A 298-amino-acid chain; its full sequence is MTKQTEYKRKPEWLKIKLNTNENYTGLKKMMRSKNLHTVCEEAKCPNIHECWAVRKTATFMILGAVCTRACRFCAVKTGLPTELDLQEPERVADSVVQMGLKHVVITAVARDDLKDGGAAVFAETVRAVRRKNPFTSIEVLPSDMGGVEENLKMLMDAKPDILNHNIETVRRLSDRVRARAKYDRSLEFLRRAKEMQPDIPTKSSIMVGLGETREDLIEAMDDLRANNVDILTLGQYLQPSKKHLPVLKYYPPAEFAELKEIALSKGFSHCEAGPLVRSSYHADEQVRSAKENTAEAK.

Cysteine 40, cysteine 45, cysteine 51, cysteine 67, cysteine 71, cysteine 74, and serine 280 together coordinate [4Fe-4S] cluster. Positions 53–269 (AVRKTATFMI…KEIALSKGFS (217 aa)) constitute a Radical SAM core domain.

The protein belongs to the radical SAM superfamily. Lipoyl synthase family. It depends on [4Fe-4S] cluster as a cofactor.

The protein localises to the cytoplasm. It catalyses the reaction [[Fe-S] cluster scaffold protein carrying a second [4Fe-4S](2+) cluster] + N(6)-octanoyl-L-lysyl-[protein] + 2 oxidized [2Fe-2S]-[ferredoxin] + 2 S-adenosyl-L-methionine + 4 H(+) = [[Fe-S] cluster scaffold protein] + N(6)-[(R)-dihydrolipoyl]-L-lysyl-[protein] + 4 Fe(3+) + 2 hydrogen sulfide + 2 5'-deoxyadenosine + 2 L-methionine + 2 reduced [2Fe-2S]-[ferredoxin]. The protein operates within protein modification; protein lipoylation via endogenous pathway; protein N(6)-(lipoyl)lysine from octanoyl-[acyl-carrier-protein]. In terms of biological role, catalyzes the radical-mediated insertion of two sulfur atoms into the C-6 and C-8 positions of the octanoyl moiety bound to the lipoyl domains of lipoate-dependent enzymes, thereby converting the octanoylated domains into lipoylated derivatives. This Bacillus cereus (strain ATCC 10987 / NRS 248) protein is Lipoyl synthase.